Consider the following 1851-residue polypeptide: Voltage-dependent calcium channel type A subunit alpha-1 (1851 aa).

Residues 1–38 (MGGPKKEENPPGGGPTSLFILTEDNPIRKYTRFIIEWP) are Cytoplasmic-facing. Residues 25–316 (NPIRKYTRFI…LVLGVLSGEF (292 aa)) form an I repeat. Residues 39–57 (PFEYAVLLTIIANCVVLAL) form a helical membrane-spanning segment. At 58–75 (EEHLPGGDKTVLAQKLEK) the chain is on the extracellular side. The chain crosses the membrane as a helical span at residues 76-95 (TEAYFLCIFCVEASLKILAL). The Cytoplasmic segment spans residues 96-107 (GLVLHKHSYLRN). The chain crosses the membrane as a helical span at residues 108-128 (IWNIMDFFVVVTGFMTQYPQI). Residues 129-133 (GPEVD) are Extracellular-facing. A helical membrane pass occupies residues 134 to 152 (LRTLRAIRVLRPLKLVSGI). Over 153 to 171 (PSLQVVLKSIIKAMAPLLQ) the chain is Cytoplasmic. Residues 172–191 (IGLLVLFAIVIFAIIGLEFY) traverse the membrane as a helical segment. Topologically, residues 192 to 288 (SGALHKTCYS…WTNDALGSAF (97 aa)) are extracellular. 2 N-linked (GlcNAc...) asparagine glycosylation sites follow: Asn234 and Asn235. The chain crosses the membrane as a helical span at residues 289 to 313 (NWIYFVPLIVIGSFFMLNLVLGVLS). Topologically, residues 314–441 (GEFSNERNRV…FWIRHTVKTQ (128 aa)) are cytoplasmic. The interval 381–417 (RKKLKSLGKSKSTDTEEEEAEEDYGDDGYLKTRSKPQ) is disordered. Positions 395 to 406 (TEEEEAEEDYGD) are enriched in acidic residues. One copy of the II repeat lies at 427-670 (EKRFRFWIRH…VFLAIAVDNL (244 aa)). A helical transmembrane segment spans residues 442–460 (WFYWFVIVLVFLNTVCVAV). Residues 461-475 (EHYGQPSFLTEFLYY) are Extracellular-facing. Residues 476–495 (AEFIFLGLFMSEMFIKMYAL) form a helical membrane-spanning segment. Residues 496-503 (GPRIYFES) are Cytoplasmic-facing. A helical membrane pass occupies residues 504–522 (SFNRFDCVVISGSIFEVIW). Topologically, residues 523 to 531 (SEVKGGSFG) are extracellular. Residues 532–550 (LSVLRALRLLRIFKVTKYW) traverse the membrane as a helical segment. The Cytoplasmic portion of the chain corresponds to 551–569 (SSLRNLVISLLNSMRSIIS). Residues 570-589 (LLFLLFLFILIFALLGMQLF) form a helical membrane-spanning segment. The Extracellular segment spans residues 590–642 (GGQFNLPGGTPETNFNTFPIALLTVFQILTGEDWNEVMYQGIISQGGAQKGMI). Residues 643–667 (YSIYFIVLVLFGNYTLLNVFLAIAV) traverse the membrane as a helical segment. Residues 668–767 (DNLANAQELT…IRRGAHWVVN (100 aa)) lie on the Cytoplasmic side of the membrane. Residues 710 to 741 (ENGDGAVAPSKSKGKKKEEEKKEEEEVTEGPK) are disordered. An III repeat occupies 762–1049 (AHWVVNLPYF…IITFQEQGEA (288 aa)). The chain crosses the membrane as a helical span at residues 768–786 (LPYFDFFIMVVISMSSIAL). At 787 to 802 (AAEDPVRENSRRNKIL) the chain is on the extracellular side. A helical membrane pass occupies residues 803 to 822 (NYFDYAFTGVFTIEMLLKIV). Residues 823 to 834 (DLGVILHPGSYL) lie on the Cytoplasmic side of the membrane. A helical transmembrane segment spans residues 835–853 (REFWNIMDAVVVICAAVSF). Over 854–866 (GFDMSGSSAGQNL) the chain is Extracellular. Residue Asn865 is glycosylated (N-linked (GlcNAc...) asparagine). The helical transmembrane segment at 867–885 (STIKSLRVLRVLRPLKTIK) threads the bilayer. The Cytoplasmic portion of the chain corresponds to 886 to 904 (RVPKLKAVFDCVVNSLKNV). A helical transmembrane segment spans residues 905 to 924 (VNILIVYILFQFIFSVIGVQ). At 925-1013 (LFNGKFFYCT…EDRGPIQNFR (89 aa)) the chain is on the extracellular side. Residues 1014–1038 (IEMSIFYIVYFIVFPFFFVNIFVAL) traverse the membrane as a helical segment. Over 1039 to 1093 (IIITFQEQGEAELQDGEIDKNQKSCIDFTIGARPLERYMPKNRNTFKYKVWRIVV) the chain is Cytoplasmic. The IV repeat unit spans residues 1086 to 1347 (YKVWRIVVST…DNFDYLTRDS (262 aa)). Residues 1094 to 1122 (STPFEYFIMMLIVFNTLLLMMKYHNQGDM) form a helical membrane-spanning segment. Residues 1123–1127 (YEKSL) are Extracellular-facing. The helical transmembrane segment at 1128-1147 (KYINMGFTGMFSVETVLKII) threads the bilayer. The Cytoplasmic segment spans residues 1148–1155 (GFGVKNFF). A helical membrane pass occupies residues 1156–1174 (KDPWNIFDLITVLGSIVDA). Residues 1175 to 1184 (LWMEFGHDDS) are Extracellular-facing. The helical transmembrane segment at 1185 to 1203 (NSINVGFLRLFRAARLIKL) threads the bilayer. Residues 1204–1222 (LRQGYTIRILLWTFVQSFK) are Cytoplasmic-facing. Residues 1223–1242 (ALPYVCLLIAMLFFIYAIIG) traverse the membrane as a helical segment. Topologically, residues 1243–1308 (MQVFGNIKLG…DAEKAPGEYC (66 aa)) are extracellular. The phenylalkylamine binding stretch occupies residues 1306 to 1348 (EYCGSTLAYAYFVSFIFFCSFLMLNLFVAVIMDNFDYLTRDSS). A helical transmembrane segment spans residues 1309–1333 (GSTLAYAYFVSFIFFCSFLMLNLFV). The Cytoplasmic portion of the chain corresponds to 1334 to 1851 (AVIMDNFDYL…HSDSDEEDWC (518 aa)). One can recognise an EF-hand domain in the interval 1353 to 1388 (HHLDEFVRIWAEYDPNATGKIHYTEMYDMLKNMDPP). Ca(2+)-binding residues include Asp1366, Asn1368, Thr1370, Lys1372, and Glu1377. 4 disordered regions span residues 1513–1572 (DASR…HHDI), 1588–1653 (TRHP…SPAR), 1685–1764 (RAGI…DRDR), and 1823–1851 (VLPS…EDWC). Residues 1589–1600 (RHPRHGNSHPRY) are compositionally biased toward basic residues. Positions 1604 to 1619 (SWSASTSPARSPSPSR) are enriched in low complexity. 2 stretches are compositionally biased toward polar residues: residues 1637–1649 (YGTT…SRSP) and 1698–1710 (KPST…TNIN). Residues 1734 to 1764 (HHRDLLRDPRDMYYSSRERERDRERLRDRDR) are compositionally biased toward basic and acidic residues.

Belongs to the calcium channel alpha-1 subunit (TC 1.A.1.11) family. As to expression, expressed widely in the embryonic nervous system.

Its subcellular location is the membrane. Functionally, voltage-sensitive calcium channels (VSCC) mediate the entry of calcium ions into excitable cells and are also involved in a variety of calcium-dependent processes, including muscle contraction, neurotransmitter release, gene expression, cell motility, cell division and cell death. Probably encodes a dihydropyridine-insensitive current. Vital for survival to adulthood. The protein is Voltage-dependent calcium channel type A subunit alpha-1 (cac) of Drosophila melanogaster (Fruit fly).